Here is a 211-residue protein sequence, read N- to C-terminus: Redox-sensing transcriptional repressor Rex (211 aa).

The H-T-H motif DNA-binding region spans 18 to 57 (LYYRFLKNLHASGKQRVSSAELSEAVKVDSATIRRDFSYF). 92-97 (GVGNLG) is a binding site for NAD(+).

This sequence belongs to the transcriptional regulatory Rex family. As to quaternary structure, homodimer.

The protein resides in the cytoplasm. Its function is as follows. Modulates transcription in response to changes in cellular NADH/NAD(+) redox state. The protein is Redox-sensing transcriptional repressor Rex of Anoxybacillus flavithermus (strain DSM 21510 / WK1).